Here is a 386-residue protein sequence, read N- to C-terminus: Zinc finger CCCH domain-containing protein 2 (386 aa).

2 consecutive C3H1-type zinc fingers follow at residues 116–143 (HYSG…HGVF) and 151–175 (RYRT…HTPD). 2 disordered regions span residues 180–200 (LPAQ…ESYD) and 220–252 (SSPT…RRGS). Positions 182–192 (AQQSSPRSVAS) are enriched in polar residues. A compositionally biased stretch (low complexity) spans 220-229 (SSPTSTLMSP). Residues 230–241 (PKSPPSESPPLS) are compositionally biased toward pro residues.

The protein localises to the nucleus. Involved in leaf senescence delay. May repress jasmonic acid (JA) signaling role in promoting leaf senescence. May regulate panicle development and pollination/fertilization process. The protein is Zinc finger CCCH domain-containing protein 2 of Oryza sativa subsp. japonica (Rice).